The following is a 397-amino-acid chain: Acetate kinase (397 aa).

N8 serves as a coordination point for Mg(2+). Position 15 (K15) interacts with ATP. A substrate-binding site is contributed by R89. D146 (proton donor/acceptor) is an active-site residue. ATP-binding positions include H206–G210, D281–R283, and G329–N333. Mg(2+) is bound at residue E382.

This sequence belongs to the acetokinase family. Homodimer. It depends on Mg(2+) as a cofactor. Requires Mn(2+) as cofactor.

The protein localises to the cytoplasm. It catalyses the reaction acetate + ATP = acetyl phosphate + ADP. Its pathway is metabolic intermediate biosynthesis; acetyl-CoA biosynthesis; acetyl-CoA from acetate: step 1/2. Its function is as follows. Catalyzes the formation of acetyl phosphate from acetate and ATP. Can also catalyze the reverse reaction. This Anoxybacillus flavithermus (strain DSM 21510 / WK1) protein is Acetate kinase.